A 148-amino-acid chain; its full sequence is MAFKYQLLLSAAVMLAILVATATSFGDSCAPGDALPHNPLRACRTYVVSQICHQGPRLLTSDMKRRCCDELSAIPAYCRCEALRIIMQGVVTWQGAFEGAYFKDSPNCPRERQTSYAANLVTPQECNLGTIHGSAYCPELQPGYGVVL.

The N-terminal stretch at methionine 1–serine 24 is a signal peptide.

It belongs to the protease inhibitor I6 (cereal trypsin/alpha-amylase inhibitor) family. Post-translationally, five disulfide bonds, which are essential for the inhibitor activity, are probably present. As to expression, expressed in the developing endosperm. Not detected in embryo, aleurone, coleoptile, roots and leaves.

Its subcellular location is the secreted. Functionally, inhibits trypsin in vitro. Probably plays a protective role through inhibition of insect midgut proteases. This chain is Trypsin inhibitor CMe (ITR1), found in Hordeum vulgare (Barley).